The following is a 493-amino-acid chain: Cholesteryl ester transfer protein (493 aa).

Residues 1–17 form the signal peptide; the sequence is MLAATVLTLALLGNVHA. Residues Asn-59 and Asn-105 are each glycosylated (N-linked (GlcNAc...) asparagine). A disulfide bridge connects residues Cys-160 and Cys-201. Residues Asn-257, Asn-358, and Asn-413 are each glycosylated (N-linked (GlcNAc...) asparagine).

It belongs to the BPI/LBP/Plunc superfamily. BPI/LBP family. As to expression, probably primarily expressed in liver and adipose tissues. Detected in adrenal gland, mesenteric fat, spleen and aorta.

Its subcellular location is the secreted. The enzyme catalyses cholesteryl (9Z-octadecenoate)(in) = cholesteryl (9Z-octadecenoate)(out). It carries out the reaction 1,2,3-tri-(9Z-octadecenoyl)-glycerol(in) = 1,2,3-tri-(9Z-octadecenoyl)-glycerol(out). It catalyses the reaction cholesteryl (9Z,12Z)-octadecadienoate(in) = cholesteryl (9Z,12Z)-octadecadienoate(out). Functionally, involved in the transfer of neutral lipids, including cholesteryl ester and triglyceride, among lipoprotein particles. Allows the net movement of cholesteryl ester from high density lipoproteins/HDL to triglyceride-rich very low density lipoproteins/VLDL, and the equimolar transport of triglyceride from VLDL to HDL. Regulates the reverse cholesterol transport, by which excess cholesterol is removed from peripheral tissues and returned to the liver for elimination. In Macaca fascicularis (Crab-eating macaque), this protein is Cholesteryl ester transfer protein.